A 534-amino-acid polypeptide reads, in one-letter code: Glycerol kinase 5 (534 aa).

ATP contacts are provided by Ser33 and Thr34. Glycerol is bound by residues Arg103, Asp280, and Gln281. Residues Thr302, Gly345, and Gly445 each contribute to the ATP site.

This sequence belongs to the FGGY kinase family. As to expression, expressed predominantly in sebaceous glands.

Its subcellular location is the cytoplasm. It catalyses the reaction glycerol + ATP = sn-glycerol 3-phosphate + ADP + H(+). The protein operates within polyol metabolism; glycerol degradation via glycerol kinase pathway; sn-glycerol 3-phosphate from glycerol: step 1/1. Functionally, skin-specific kinase that plays a key role in glycerol metabolism, catalyzing its phosphorylation to produce sn-glycerol 3-phosphate. Involved in skin-specific regulation of sterol regulatory element-binding protein (SREBP) processing and lipid biosynthesis. The sequence is that of Glycerol kinase 5 (Gk5) from Mus musculus (Mouse).